The sequence spans 403 residues: MLKCGMTGGQVKVFGKAVQTLSRVSDELWLDPSEKGLALRSVNSCHSTYGYVLFSSMFFQHYQWSPFATMSDTDLPLNLNCKLAIKSVLPIFRCLNYLERSVEKCTVVARADKCRVVIQFFGKHGIKRTHNVYFQDSQPLKIIFEKSLCANILMIKPRLLTEAIALLTSNQEEVTFSVTPGNFCLKSLSGELLDLTSSVYSEMSFGPEEFDFFQVGLDTEITFCFKELKGILTFSEVMHAPLAIYFDFPGKPVVLSVEDMLLEANFILATLVDYPSRTSSPQLLPLSQARRSHPIQSSAPEDKSRVSQTPESISRAAPKRLFPKDSPDSSSAAETKRASAGQDDIFEVPESVVSDMEEERSPSHLRKFSCMFFGAVSCEQQEYAGHPLDSLAVASDSEEDVSG.

The segment at Pro285–Glu347 is disordered. Ser354 and Ser363 each carry phosphoserine.

The protein belongs to the rad9 family. In terms of assembly, interacts with HUS1, HUS1B, RAD1, RAD9A and RAD17.

The chain is Cell cycle checkpoint control protein RAD9B (Rad9b) from Mus musculus (Mouse).